The primary structure comprises 193 residues: dCTP deaminase (193 aa).

DCTP is bound by residues 110–115, D128, 136–138, Y171, K178, and Q182; these read RSSLAR and VLE. E138 functions as the Proton donor/acceptor in the catalytic mechanism. The tract at residues 169–193 is disordered; sequence RPYNRRQDAKYKDQQGAVASRIDKD.

Belongs to the dCTP deaminase family. Homotrimer.

It carries out the reaction dCTP + H2O + H(+) = dUTP + NH4(+). The protein operates within pyrimidine metabolism; dUMP biosynthesis; dUMP from dCTP (dUTP route): step 1/2. Catalyzes the deamination of dCTP to dUTP. The polypeptide is dCTP deaminase (Pectobacterium atrosepticum (strain SCRI 1043 / ATCC BAA-672) (Erwinia carotovora subsp. atroseptica)).